Reading from the N-terminus, the 2150-residue chain is Hybrid signal transduction histidine kinase A (2150 aa).

Positions 1-10 (MELKTFKDLN) are enriched in basic and acidic residues. Disordered stretches follow at residues 1-41 (MELK…QQQQ), 68-149 (HIPQ…YYYS), 184-267 (NSSS…HQRR), 286-323 (KNKP…GSLG), 339-359 (TEES…NCGS), 415-505 (NNNN…NSPR), 520-546 (SLTS…GRNG), and 560-733 (KPVV…NGAT). Residues 19-32 (PVINTGDQPNPLRT) are compositionally biased toward polar residues. Low complexity predominate over residues 68–81 (HIPQQLYQKQQQQQ). The span at 82–104 (HSHSYGNHSFIHNVSPTSPSYDI) shows a compositional bias: polar residues. Low complexity-rich tracts occupy residues 105 to 145 (NNNN…YNNN) and 184 to 244 (NSSS…NNNI). Polar residues predominate over residues 289-304 (PLSSSTPSTVNTCGAV). Low complexity-rich tracts occupy residues 305-318 (NNNS…NNNS), 344-359 (GGNN…NCGS), and 415-447 (NNNN…HNIS). Residues 448-468 (PRGSNISPRSNNGGSTTISPR) show a composition bias toward polar residues. Low complexity-rich tracts occupy residues 469–485 (NISN…NNNI), 520–545 (SLTS…NGRN), and 565–600 (NNGN…INNN). Over residues 614 to 628 (SKTNSLQDFETSSMN) the composition is skewed to polar residues. Over residues 657–727 (NSNNTNSNNS…NNNNNNNNNN (71 aa)) the composition is skewed to low complexity. The chain crosses the membrane as a helical span at residues 772 to 792 (AIILGLFIVGSSISILATLVL). Positions 838–1082 (STSEDQFVPF…NVGGRNWMIA (245 aa)) constitute a CHASE domain. A helical membrane pass occupies residues 1098 to 1118 (PYAIGGVCMLLSALVSFWFAV). Positions 1139–1164 (NRKLAEKALAESQERLELAMEGSEDA) form a coiled coil. 2 disordered regions span residues 1209–1228 (LNFK…FNLF) and 1233–1252 (VDSS…GGGG). Positions 1235–1317 (SSSPQSITNV…SEIKKTITRE (83 aa)) constitute a PAS domain. The region spanning 1321–1376 (MEIECRMRKKYGGYLYIIMRGKVVSNETSFKDNSLRMAGTLRDMTSRKDMQRLILE) is the PAC domain. The 228-residue stretch at 1393-1620 (TVSHEVRTPL…KFKCIIPFLL (228 aa)) folds into the Histidine kinase domain. The residue at position 1396 (His1396) is a Phosphohistidine; by autocatalysis. Disordered stretches follow at residues 1874–1893 (GGGS…NNNF), 1933–1952 (HGNQ…NNSS), and 1962–2017 (QNNN…DTPV). Low complexity-rich tracts occupy residues 1878 to 1893 (NTMN…NNNF), 1935 to 1952 (NQQQ…NNSS), and 1962 to 2002 (QNNN…TPTL). Positions 2026-2146 (KALIVEDNEL…TLKDALAKWG (121 aa)) constitute a Response regulatory domain. Asp2076 is subject to 4-aspartylphosphate.

As to quaternary structure, interacts with SDF-2, an acbA peptide involved in sporulation.

It is found in the cell membrane. The enzyme catalyses ATP + protein L-histidine = ADP + protein N-phospho-L-histidine.. Functionally, acts as a receptor histidine kinase for the cytokinin SDF-2 in a signal transduction pathway that regulates prestalk gene expression and controls terminal differentiation of prespore cells. Binding of SDF-2 to this protein inhibits phosphorelay and induces rapid sporulation. This protein undergoes an ATP-dependent autophosphorylation at a conserved histidine residue in the kinase core, and a phosphoryl group is then transferred to a conserved aspartate residue in the receiver domain. The sequence is that of Hybrid signal transduction histidine kinase A (dhkA) from Dictyostelium discoideum (Social amoeba).